The following is a 164-amino-acid chain: Endoribonuclease YbeY (164 aa).

Residues H111, H115, and H121 each coordinate Zn(2+). The interval 142-164 (GYPDPYADDETETSPTVTTKDSE) is disordered. Residues 154–164 (TSPTVTTKDSE) show a composition bias toward polar residues.

The protein belongs to the endoribonuclease YbeY family. Requires Zn(2+) as cofactor.

The protein localises to the cytoplasm. Single strand-specific metallo-endoribonuclease involved in late-stage 70S ribosome quality control and in maturation of the 3' terminus of the 16S rRNA. The protein is Endoribonuclease YbeY of Pseudomonas fluorescens (strain Pf0-1).